The following is a 119-amino-acid chain: MAKIKKGDLVQVITGAKAERGGDRGKQGKVLRVFPDTNRVLVEGINRVTKHTKVGQSQRGTKTGGIEVVEASIHISNVALVDPSTKKPTRVGFRTETVERNGKKREVRVRVAKSSGKDI.

It belongs to the universal ribosomal protein uL24 family. As to quaternary structure, part of the 50S ribosomal subunit.

In terms of biological role, one of two assembly initiator proteins, it binds directly to the 5'-end of the 23S rRNA, where it nucleates assembly of the 50S subunit. Its function is as follows. One of the proteins that surrounds the polypeptide exit tunnel on the outside of the subunit. This is Large ribosomal subunit protein uL24 from Arthrobacter sp. (strain FB24).